The following is a 284-amino-acid chain: Bifunctional protein FolD (284 aa).

NADP(+)-binding positions include 164–166 (GRG), T189, and I230.

This sequence belongs to the tetrahydrofolate dehydrogenase/cyclohydrolase family. In terms of assembly, homodimer.

The catalysed reaction is (6R)-5,10-methylene-5,6,7,8-tetrahydrofolate + NADP(+) = (6R)-5,10-methenyltetrahydrofolate + NADPH. It carries out the reaction (6R)-5,10-methenyltetrahydrofolate + H2O = (6R)-10-formyltetrahydrofolate + H(+). Its pathway is one-carbon metabolism; tetrahydrofolate interconversion. Functionally, catalyzes the oxidation of 5,10-methylenetetrahydrofolate to 5,10-methenyltetrahydrofolate and then the hydrolysis of 5,10-methenyltetrahydrofolate to 10-formyltetrahydrofolate. This chain is Bifunctional protein FolD, found in Pelotomaculum thermopropionicum (strain DSM 13744 / JCM 10971 / SI).